Reading from the N-terminus, the 578-residue chain is Proline--tRNA ligase (578 aa).

The protein belongs to the class-II aminoacyl-tRNA synthetase family. ProS type 1 subfamily. As to quaternary structure, homodimer.

The protein localises to the cytoplasm. The catalysed reaction is tRNA(Pro) + L-proline + ATP = L-prolyl-tRNA(Pro) + AMP + diphosphate. Functionally, catalyzes the attachment of proline to tRNA(Pro) in a two-step reaction: proline is first activated by ATP to form Pro-AMP and then transferred to the acceptor end of tRNA(Pro). As ProRS can inadvertently accommodate and process non-cognate amino acids such as alanine and cysteine, to avoid such errors it has two additional distinct editing activities against alanine. One activity is designated as 'pretransfer' editing and involves the tRNA(Pro)-independent hydrolysis of activated Ala-AMP. The other activity is designated 'posttransfer' editing and involves deacylation of mischarged Ala-tRNA(Pro). The misacylated Cys-tRNA(Pro) is not edited by ProRS. The sequence is that of Proline--tRNA ligase from Burkholderia pseudomallei (strain 668).